We begin with the raw amino-acid sequence, 375 residues long: Dual-specificity RNA methyltransferase RlmN (375 aa).

Glu94 (proton acceptor) is an active-site residue. Residues 100–339 (EDDRATLCVS…VTVRKTRGDD (240 aa)) enclose the Radical SAM core domain. Cys107 and Cys344 are oxidised to a cystine. [4Fe-4S] cluster-binding residues include Cys114, Cys118, and Cys121. S-adenosyl-L-methionine is bound by residues 168-169 (GE), Ser200, 222-224 (SLH), and Asn301. Cys344 acts as the S-methylcysteine intermediate in catalysis.

It belongs to the radical SAM superfamily. RlmN family. Requires [4Fe-4S] cluster as cofactor.

It localises to the cytoplasm. The catalysed reaction is adenosine(2503) in 23S rRNA + 2 reduced [2Fe-2S]-[ferredoxin] + 2 S-adenosyl-L-methionine = 2-methyladenosine(2503) in 23S rRNA + 5'-deoxyadenosine + L-methionine + 2 oxidized [2Fe-2S]-[ferredoxin] + S-adenosyl-L-homocysteine. It carries out the reaction adenosine(37) in tRNA + 2 reduced [2Fe-2S]-[ferredoxin] + 2 S-adenosyl-L-methionine = 2-methyladenosine(37) in tRNA + 5'-deoxyadenosine + L-methionine + 2 oxidized [2Fe-2S]-[ferredoxin] + S-adenosyl-L-homocysteine. In terms of biological role, specifically methylates position 2 of adenine 2503 in 23S rRNA and position 2 of adenine 37 in tRNAs. m2A2503 modification seems to play a crucial role in the proofreading step occurring at the peptidyl transferase center and thus would serve to optimize ribosomal fidelity. The protein is Dual-specificity RNA methyltransferase RlmN of Vibrio campbellii (strain ATCC BAA-1116).